The following is a 486-amino-acid chain: Kynurenine 3-monooxygenase (486 aa).

FAD-binding positions include Val19, 37–40, and Ala57; that span reads YEAR. The L-kynurenine site is built by Arg85 and Tyr99. FAD contacts are provided by residues Arg111, Leu136, Thr172, Asp304, and 317–318; that span reads MN. The L-kynurenine site is built by Asn363 and Tyr398. The next 2 membrane-spanning stretches (helical) occupy residues 385–404 and 425–445; these read FLHA…VTFS and GLFF…IHYM. Residue Asn465 is glycosylated (N-linked (GlcNAc...) asparagine).

Belongs to the aromatic-ring hydroxylase family. KMO subfamily. FAD is required as a cofactor. In terms of tissue distribution, highest levels in placenta and liver. Detectable in kidney.

It localises to the mitochondrion outer membrane. It carries out the reaction L-kynurenine + NADPH + O2 + H(+) = 3-hydroxy-L-kynurenine + NADP(+) + H2O. Its pathway is cofactor biosynthesis; NAD(+) biosynthesis; quinolinate from L-kynurenine: step 1/3. Catalyzes the hydroxylation of L-kynurenine (L-Kyn) to form 3-hydroxy-L-kynurenine (L-3OHKyn). Required for synthesis of quinolinic acid, a neurotoxic NMDA receptor antagonist and potential endogenous inhibitor of NMDA receptor signaling in axonal targeting, synaptogenesis and apoptosis during brain development. Quinolinic acid may also affect NMDA receptor signaling in pancreatic beta cells, osteoblasts, myocardial cells, and the gastrointestinal tract. The sequence is that of Kynurenine 3-monooxygenase from Homo sapiens (Human).